A 366-amino-acid chain; its full sequence is MLIWLVELSEYFKFLNLFRYITFRTGAALFTSALIVFLFGPTIINSLRIRQGKGQPIRADGPQTHFKKAGTPTMGGLMILAGIVGASLLWADLSNVYVVATLLVTLGFGAIGFYDDYLKVTKQSHKGFSGKARLGIEFIIAGIAVYFMMRTALASGTAGSTFGSSIAFPFFKDFLINLGIMFVVFGGFVIVGAGNAVNLTDGLDGLAIVPVMIAAASFGVIAYLAGNVVFANYLQINFVPGTGELAVVLGAVIGAGLGFLWFNAPPAAIFMGDTGSLALGGTIGTVAVATKHEIVMAIIGGLFVMETLSVIIQVGFFKMTGRRVFLMAPIHHHFEKKGWTESQVVIRFWIIAVGLALLGLSTLKLR.

The next 10 membrane-spanning stretches (helical) occupy residues 27 to 47 (AALF…INSL), 71 to 91 (TPTM…LLWA), 93 to 113 (LSNV…AIGF), 134 to 154 (LGIE…TALA), 174 to 194 (FLIN…VGAG), 205 to 225 (GLAI…AYLA), 245 to 265 (LAVV…FNAP), 268 to 288 (AIFM…TVAV), 294 to 314 (IVMA…IIQV), and 343 to 363 (QVVI…LSTL).

The protein belongs to the glycosyltransferase 4 family. MraY subfamily. It depends on Mg(2+) as a cofactor.

Its subcellular location is the cell inner membrane. The catalysed reaction is UDP-N-acetyl-alpha-D-muramoyl-L-alanyl-gamma-D-glutamyl-meso-2,6-diaminopimeloyl-D-alanyl-D-alanine + di-trans,octa-cis-undecaprenyl phosphate = di-trans,octa-cis-undecaprenyl diphospho-N-acetyl-alpha-D-muramoyl-L-alanyl-D-glutamyl-meso-2,6-diaminopimeloyl-D-alanyl-D-alanine + UMP. Its pathway is cell wall biogenesis; peptidoglycan biosynthesis. Catalyzes the initial step of the lipid cycle reactions in the biosynthesis of the cell wall peptidoglycan: transfers peptidoglycan precursor phospho-MurNAc-pentapeptide from UDP-MurNAc-pentapeptide onto the lipid carrier undecaprenyl phosphate, yielding undecaprenyl-pyrophosphoryl-MurNAc-pentapeptide, known as lipid I. This chain is Phospho-N-acetylmuramoyl-pentapeptide-transferase, found in Rhizobium etli (strain CIAT 652).